The primary structure comprises 2376 residues: Cell morphogenesis protein PAG1 (2376 aa).

The disordered stretch occupies residues 1 to 30; that stretch reads MASRFTFPPQRDQGIGFTFPPTNKAEGSSN. Position 141 is a phosphoserine (serine 141). Positions 275-294 are disordered; sequence SSSNTTSKYKHNNNTNNLPG. Phosphoserine is present on serine 1144. The residue at position 2264 (threonine 2264) is a Phosphothreonine. Phosphoserine is present on residues serine 2267 and serine 2355.

To S.pombe mor2. As to quaternary structure, associates with CBK1.

Seems to play a role in cell morphogenesis. The chain is Cell morphogenesis protein PAG1 (TAO3) from Saccharomyces cerevisiae (strain ATCC 204508 / S288c) (Baker's yeast).